The chain runs to 145 residues: MEITKEIFSLIAAVMLLLGSFIALISAIGIVKFQDVFLRSHAATKSSTLSVLLTLIGVLIYFIVNTGFFSVRLLLSLVFINLTSPVGMHLVARAAYRNGAYMYRKNDDHTHASILLSSNEQNSTEALQLRAKKREEHRKKWYQND.

3 helical membrane passes run 11 to 31, 51 to 71, and 72 to 92; these read IAAV…IGIV, VLLT…FFSV, and RLLL…HLVA.

It belongs to the CPA3 antiporters (TC 2.A.63) subunit G family. In terms of assembly, may form a heterooligomeric complex that consists of seven subunits: mnhA2, mnhB2, mnhC2, mnhD2, mnhE2, mnhF2 and mnhG2.

Its subcellular location is the cell membrane. The chain is Putative antiporter subunit mnhG2 (mnhG2) from Staphylococcus aureus (strain bovine RF122 / ET3-1).